Here is a 608-residue protein sequence, read N- to C-terminus: Protein SHQ1 homolog (608 aa).

Disordered regions lie at residues 487-531 and 543-608; these read DAGS…SFYS and IVYE…ASTT. A compositionally biased stretch (low complexity) spans 489–498; sequence GSQGSSPQQQ. Composition is skewed to acidic residues over residues 502-524 and 543-579; these read DDLD…DESV and IVYE…EDDS. Polar residues predominate over residues 588-608; that stretch reads EAEGNSVIEQCSNSETAASTT.

The protein belongs to the SHQ1 family.

In terms of biological role, required for the quantitative accumulation of H/ACA ribonucleoproteins (RNPs). The polypeptide is Protein SHQ1 homolog (Drosophila melanogaster (Fruit fly)).